A 160-amino-acid chain; its full sequence is Ribosome maturation factor RimP (160 aa).

This sequence belongs to the RimP family.

Its subcellular location is the cytoplasm. Its function is as follows. Required for maturation of 30S ribosomal subunits. This Orientia tsutsugamushi (strain Ikeda) (Rickettsia tsutsugamushi) protein is Ribosome maturation factor RimP.